The following is a 188-amino-acid chain: Elongation factor P (188 aa).

Belongs to the elongation factor P family.

Its subcellular location is the cytoplasm. It participates in protein biosynthesis; polypeptide chain elongation. Its function is as follows. Involved in peptide bond synthesis. Stimulates efficient translation and peptide-bond synthesis on native or reconstituted 70S ribosomes in vitro. Probably functions indirectly by altering the affinity of the ribosome for aminoacyl-tRNA, thus increasing their reactivity as acceptors for peptidyl transferase. In Bradyrhizobium diazoefficiens (strain JCM 10833 / BCRC 13528 / IAM 13628 / NBRC 14792 / USDA 110), this protein is Elongation factor P.